The following is a 97-amino-acid chain: Ferredoxin-3 (97 aa).

4Fe-4S ferredoxin-type domains are found at residues Phe18–Leu47 and Lys65–Leu95. Cys27, Cys30, Cys33, Cys37, Cys75, Cys78, Cys81, and Cys85 together coordinate [4Fe-4S] cluster.

As to quaternary structure, homodimer. [4Fe-4S] cluster is required as a cofactor.

Functionally, ferredoxins are iron-sulfur proteins that transfer electrons in a wide variety of metabolic reactions. This Nostoc sp. (strain PCC 7120 / SAG 25.82 / UTEX 2576) protein is Ferredoxin-3 (fdxB).